Consider the following 862-residue polypeptide: Kinesin-like protein KIN-7J (862 aa).

A Kinesin motor domain is found at 9 to 331; sequence RIVVSVRLRP…LLFANCAKDV (323 aa). Residue 95–102 coordinates ATP; the sequence is GQTSSGKT. Residues 340-415 adopt a coiled-coil conformation; the sequence is VMSDKALVKH…NFRKVASDGD (76 aa). 2 stretches are compositionally biased toward basic and acidic residues: residues 475–499 and 518–531; these read EEHEAQRVAHRAESEPPEEHCKEVQ and PEKKTHTDDQKHSE. Disordered stretches follow at residues 475–532 and 596–643; these read EEHE…HSES and DDSA…STCN. Residues 598-610 show a composition bias toward polar residues; it reads SASTTPSSETFRY. A compositionally biased stretch (basic and acidic residues) spans 613–629; it reads RRPEKVRKSLSPDEIAD.

Belongs to the TRAFAC class myosin-kinesin ATPase superfamily. Kinesin family. KIN-7 subfamily.

The chain is Kinesin-like protein KIN-7J from Oryza sativa subsp. japonica (Rice).